Consider the following 612-residue polypeptide: Chloride intracellular channel protein 6 (612 aa).

A disordered region spans residues 1–373 (MAEATEPKEV…NGPASEEGDL (373 aa)). Residues 34–51 (LEGREASEGAAEAPRDLG) show a composition bias toward basic and acidic residues. Position 40 is a phosphoserine (serine 40). Over residues 84 to 96 (PGTETPGTSGAPG) the composition is skewed to low complexity. Residues 120 to 129 (QQVQGTSSGL) show a composition bias toward polar residues. The span at 140 to 153 (EDARREPEDPKASE) shows a compositional bias: basic and acidic residues. The span at 208-223 (SSPQPQDEAIEIAAAE) shows a compositional bias: low complexity. Composition is skewed to basic and acidic residues over residues 240-264 (AKGEGETLRKDGFEEAAPEEARVDS) and 275-303 (EEARVDSGENRDQGRLQEETGEEEARPES). Residues serine 264, serine 303, and serine 321 each carry the phosphoserine modification. 2 stretches are compositionally biased toward basic and acidic residues: residues 325–335 (EEAKSTGHEES) and 354–364 (ELGRVNGRREN). The residue at position 368 (serine 368) is a Phosphoserine. The short motif at 395–398 (CPFS) is the G-site element. Residues 397 to 417 (FSQRLFMILWLKGVIFNVTTV) traverse the membrane as a helical segment. A GST C-terminal domain is found at 441 to 612 (DGEVKTDVNK…AYSDAAKRMK (172 aa)).

The protein belongs to the chloride channel CLIC family. In terms of assembly, monomer (soluble state). Interacts with dopamine receptors DRD2, DRD3 and DRD4. Post-translationally, phosphorylated. In terms of tissue distribution, predominantly expressed in brain, pituitary and stomach. In adult brain, it is restricted to the choroid plexus, the striatal proliferative subventricular zone and the cerebellum where it colocalizes with the D(3)R in the Purkinje cells of the lobules IX and X.

It localises to the cytoplasm. The protein localises to the cell membrane. It catalyses the reaction chloride(in) = chloride(out). Channel activity is redox- and pH-regulated. Inhibited by IAA-94. Its function is as follows. In the soluble state, catalyzes glutaredoxin-like thiol disulfide exchange reactions with reduced glutathione as electron donor. Can insert into membranes and form voltage-dependent chloride-selective channels. The channel opens upon membrane depolarization at positive voltages and closes at negative membrane voltages. May play a critical role in water-secreting cells, possibly through the regulation of chloride ion transport. In Rattus norvegicus (Rat), this protein is Chloride intracellular channel protein 6 (Clic6).